We begin with the raw amino-acid sequence, 84 residues long: ATP synthase subunit c (84 aa).

The next 2 helical transmembrane spans lie at 9–29 (IFGSVILLAAAALGTAIGFSL) and 54–74 (IVAGLLDAISMIAVGIALLFI).

Belongs to the ATPase C chain family. In terms of assembly, F-type ATPases have 2 components, F(1) - the catalytic core - and F(0) - the membrane proton channel. F(1) has five subunits: alpha(3), beta(3), gamma(1), delta(1), epsilon(1). F(0) has three main subunits: a(1), b(2) and c(10-14). The alpha and beta chains form an alternating ring which encloses part of the gamma chain. F(1) is attached to F(0) by a central stalk formed by the gamma and epsilon chains, while a peripheral stalk is formed by the delta and b chains.

Its subcellular location is the cell inner membrane. Its function is as follows. F(1)F(0) ATP synthase produces ATP from ADP in the presence of a proton or sodium gradient. F-type ATPases consist of two structural domains, F(1) containing the extramembraneous catalytic core and F(0) containing the membrane proton channel, linked together by a central stalk and a peripheral stalk. During catalysis, ATP synthesis in the catalytic domain of F(1) is coupled via a rotary mechanism of the central stalk subunits to proton translocation. Functionally, key component of the F(0) channel; it plays a direct role in translocation across the membrane. A homomeric c-ring of between 10-14 subunits forms the central stalk rotor element with the F(1) delta and epsilon subunits. The chain is ATP synthase subunit c from Histophilus somni (strain 2336) (Haemophilus somnus).